A 645-amino-acid polypeptide reads, in one-letter code: 1,4-alpha-glucan branching enzyme GlgB (645 aa).

Aspartate 309 acts as the Nucleophile in catalysis. The Proton donor role is filled by glutamate 352. Residues 619–645 (VKTRKGSKKQDGSKTKVRSNVTSRGKR) are disordered. The segment covering 636-645 (RSNVTSRGKR) has biased composition (polar residues).

The protein belongs to the glycosyl hydrolase 13 family. GlgB subfamily. As to quaternary structure, monomer.

It catalyses the reaction Transfers a segment of a (1-&gt;4)-alpha-D-glucan chain to a primary hydroxy group in a similar glucan chain.. It participates in glycan biosynthesis; glycogen biosynthesis. Its function is as follows. Catalyzes the formation of the alpha-1,6-glucosidic linkages in glycogen by scission of a 1,4-alpha-linked oligosaccharide from growing alpha-1,4-glucan chains and the subsequent attachment of the oligosaccharide to the alpha-1,6 position. The protein is 1,4-alpha-glucan branching enzyme GlgB of Bacillus anthracis (strain CDC 684 / NRRL 3495).